We begin with the raw amino-acid sequence, 373 residues long: Zinc finger protein CONSTANS (373 aa).

Residues 15-57 (NRARPCDTCRSNACTVYCHADSAYLCMSCDAQVHSANRVASRH) form a B box-type 1; atypical zinc finger. Residues cysteine 20, cysteine 23, cysteine 43, histidine 48, cysteine 63, cysteine 66, cysteine 86, and histidine 91 each coordinate Zn(2+). The B box-type 2; atypical zinc-finger motif lies at 58-108 (KRVRVCESCERAPAAFLCEADDASLCTACDSEVHSANPLARRHQRVPILPI). Polar residues predominate over residues 109–120 (SGNSFSSMTTTH). Residues 109–130 (SGNSFSSMTTTHHQSEKTMTDP) form a disordered region. The span at 121–130 (HQSEKTMTDP) shows a compositional bias: basic and acidic residues. A CCT domain is found at 306-348 (REARVLRYREKRKTRKFEKTIRYASRKAYAEIRPRVNGRFAKR).

The protein belongs to the CONSTANS family. Interacts with ADO3, SPA1, SPA2, SPA3 and SPA4. Interacts with MRG1 and MRG2 (via MRG domain). Interacts (via B-box) with MIP1A. Interacts with AS1 to form a functional complex regulating FT expression. Interacts with NFYC9. Component of a red light-dependent nuclear complex made of PHL, PHYB and CO. Interacts directly with PHL in the presence of PHYB. In terms of tissue distribution, expressed in leaves, shoots and shoot apical meristem. Detected in the vascular tissue of the hypocotyl, the cotyledons and the leaves. Restricted to the protoxylem and phloem in young inflorescence stems and to the phloem only in older inflorescences. Also detected in the vascular tissue of the root.

The protein resides in the nucleus. Functionally, transcription factor that acts in the long day flowering pathway and may mediate between the circadian clock and the control of flowering. Plays a role in the regulation of flowering time by acting on 'SUPPRESSOR OF OVEREXPRESSION OF CO1', 'TERMINAL FLOWER 1' and 'FLOWERING LOCUS T'. Also regulates P5CS2 and ACS10 (involved in proline and ethylene biosynthesis, respectively). Regulates the expression of NAKR1 by binding to the 5'-TGTG(N2-3)ATG-3' motif. This chain is Zinc finger protein CONSTANS, found in Arabidopsis thaliana (Mouse-ear cress).